The sequence spans 214 residues: Probable nicotinate-nucleotide adenylyltransferase (214 aa).

Belongs to the NadD family.

The enzyme catalyses nicotinate beta-D-ribonucleotide + ATP + H(+) = deamido-NAD(+) + diphosphate. It functions in the pathway cofactor biosynthesis; NAD(+) biosynthesis; deamido-NAD(+) from nicotinate D-ribonucleotide: step 1/1. In terms of biological role, catalyzes the reversible adenylation of nicotinate mononucleotide (NaMN) to nicotinic acid adenine dinucleotide (NaAD). The polypeptide is Probable nicotinate-nucleotide adenylyltransferase (Thermomicrobium roseum (strain ATCC 27502 / DSM 5159 / P-2)).